A 323-amino-acid chain; its full sequence is o-succinylbenzoate synthase (323 aa).

The active-site Proton donor is the lysine 134. Mg(2+) contacts are provided by aspartate 162, glutamate 191, and aspartate 214. Lysine 236 acts as the Proton acceptor in catalysis.

It belongs to the mandelate racemase/muconate lactonizing enzyme family. MenC type 1 subfamily. A divalent metal cation serves as cofactor.

The catalysed reaction is (1R,6R)-6-hydroxy-2-succinyl-cyclohexa-2,4-diene-1-carboxylate = 2-succinylbenzoate + H2O. The protein operates within quinol/quinone metabolism; 1,4-dihydroxy-2-naphthoate biosynthesis; 1,4-dihydroxy-2-naphthoate from chorismate: step 4/7. It functions in the pathway quinol/quinone metabolism; menaquinone biosynthesis. Converts 2-succinyl-6-hydroxy-2,4-cyclohexadiene-1-carboxylate (SHCHC) to 2-succinylbenzoate (OSB). This Yersinia pseudotuberculosis serotype I (strain IP32953) protein is o-succinylbenzoate synthase.